A 214-amino-acid chain; its full sequence is MKKLCAIFGGNFDPIHYGHINLAEKLAKDISIKKIILLPNNYPPHRNKTQTSISDKIKMIKLAIHNNPLFEISYLETKKNNIFYTIDTLKKIRKKISHLEPLCFIIGEDNLQTFYLWKNWREILLYSHLLIYPRKHKKQKNDELEKWIHSNTVYDCNLLHKQPCGLIFFSHAPCINISSSRIRKNYFYGKNSHSLLPSIVNNYILLKKLYYTNQ.

It belongs to the NadD family.

The enzyme catalyses nicotinate beta-D-ribonucleotide + ATP + H(+) = deamido-NAD(+) + diphosphate. The protein operates within cofactor biosynthesis; NAD(+) biosynthesis; deamido-NAD(+) from nicotinate D-ribonucleotide: step 1/1. Its function is as follows. Catalyzes the reversible adenylation of nicotinate mononucleotide (NaMN) to nicotinic acid adenine dinucleotide (NaAD). This Buchnera aphidicola subsp. Acyrthosiphon pisum (strain 5A) protein is Probable nicotinate-nucleotide adenylyltransferase.